The chain runs to 100 residues: Urease subunit gamma (100 aa).

This sequence belongs to the urease gamma subunit family. As to quaternary structure, heterotrimer of UreA (gamma), UreB (beta) and UreC (alpha) subunits. Three heterotrimers associate to form the active enzyme.

The protein resides in the cytoplasm. The catalysed reaction is urea + 2 H2O + H(+) = hydrogencarbonate + 2 NH4(+). Its pathway is nitrogen metabolism; urea degradation; CO(2) and NH(3) from urea (urease route): step 1/1. The chain is Urease subunit gamma from Escherichia coli O157:H7 (strain EC4115 / EHEC).